The following is a 200-amino-acid chain: UPF0316 protein SAUSA300_1892 (200 aa).

3 consecutive transmembrane segments (helical) span residues 8–28, 40–60, and 66–86; these read PWLMVLTIFIINICYVTFLTM, IAASVSFLEVLVYIVGLGLVM, and IQNIIAYAFGFSIGIIVGMKI.

Belongs to the UPF0316 family.

The protein resides in the cell membrane. This is UPF0316 protein SAUSA300_1892 from Staphylococcus aureus (strain USA300).